We begin with the raw amino-acid sequence, 178 residues long: Small ribosomal subunit protein uS4 (178 aa).

Residues 104–166 (RRLQTMVYKK…PNSPMASENH (63 aa)) enclose the S4 RNA-binding domain. Residues 157-178 (PNSPMASENHPERTAAVSEENQ) are disordered.

This sequence belongs to the universal ribosomal protein uS4 family. As to quaternary structure, part of the 30S ribosomal subunit. Contacts protein S5. The interaction surface between S4 and S5 is involved in control of translational fidelity.

In terms of biological role, one of the primary rRNA binding proteins, it binds directly to 16S rRNA where it nucleates assembly of the body of the 30S subunit. Its function is as follows. With S5 and S12 plays an important role in translational accuracy. This chain is Small ribosomal subunit protein uS4, found in Methanococcus maripaludis (strain C7 / ATCC BAA-1331).